The chain runs to 254 residues: Wall-associated protein (254 aa).

Residues 25 to 46 (DRVEPKEEPPKVPQAPKRDLKP) form a disordered region.

The protein localises to the secreted. Its subcellular location is the cell wall. The protein is Wall-associated protein (wapA') of Geobacillus stearothermophilus (Bacillus stearothermophilus).